The primary structure comprises 418 residues: Deubiquitinase and deneddylase Dub1 (418 aa).

Polar residues predominate over residues 1–10; the sequence is MLSPTNSISK. The tract at residues 1 to 23 is disordered; the sequence is MLSPTNSISKTAPVPPQDSSKPV. A helical membrane pass occupies residues 40 to 60; sequence TALAVLLVVVTLGLILLFYSF. The tract at residues 72–144 is disordered; the sequence is TRPSTKEQPT…PLPPKAPKPV (73 aa). Over residues 86-141 the composition is skewed to pro residues; it reads VPLPSPPLAVPRPSTPPPPVISRPSTPPAPTPAISPPSTPSAPKPSTPPPLPPKAP. Catalysis depends on residues H288, D305, and C358.

Belongs to the peptidase C48 family.

Its subcellular location is the secreted. The protein localises to the host cell. It is found in the membrane. Effector proteins function to alter host cell physiology and promote bacterial survival in host tissues. This protease possesses deubiquitinating and deneddylating activities. This is Deubiquitinase and deneddylase Dub1 (cdu1) from Chlamydia trachomatis serovar B (strain TZ1A828/OT).